The sequence spans 248 residues: 14-3-3-like protein G-BOX factor 14 lambda (248 aa).

3 positions are modified to phosphoserine; by CRPK1: serine 70, serine 112, and serine 193. The residue at position 214 (threonine 214) is a Phosphothreonine; by CRPK1.

Belongs to the 14-3-3 family. In terms of assembly, interacts with SERK1 in the cell membrane. Component of the SERK1 signaling complex, composed of KAPP, CDC48A, GRF6 or GRF7, SERK1, SERK2, SERK3/BAK1 and BRI1. Interacts with TPK1. Interacts with ADF1. Binds to CRPK1 at the plasma membrane. Interacts with DREB1A and DREB1B in the nucleus when activated by CRPK1-mediated phosphorylation upon freezing. Interacts with CINV1. Binds to the N-terminal region of B1L. In terms of processing, transphosphorylated by SERK1. Post-translationally, phosphorylated by CRPK1 in response to cold.

It is found in the nucleus. The protein localises to the cell membrane. It localises to the cytoplasm. Its function is as follows. Is associated with a DNA binding complex that binds to the G box, a well-characterized cis-acting DNA regulatory element found in plant genes. Specific negative regulator of slow-vacuolar (SV) ion channel. Mediates F-actin dynamics possibly through inhibiting ADF1 phosphorylation. Negative regulator of freezing tolerance that modulates cold-responsive C-repeat-binding factors (CBF) DREB1A and DREB1B proteins stability by facilitating their ubiquitin-mediated degradation when activated by CRPK1-mediated phosphorylation in freezing conditions; this processus is counteracted by B1L. The chain is 14-3-3-like protein G-BOX factor 14 lambda from Arabidopsis thaliana (Mouse-ear cress).